Consider the following 150-residue polypeptide: Cytochrome c oxidase subunit 5A, mitochondrial (150 aa).

The transit peptide at 1–41 directs the protein to the mitochondrion; it reads MLGAALRRCAVAATTRADPRGLLHSARTPGPAVAIQSVRCY. Positions 2–17 match the SIFI-degron motif; it reads LGAALRRCAVAATTRA. 2 positions are modified to N6-acetyllysine: Lys-87 and Lys-113. Thr-141 carries the post-translational modification Phosphothreonine.

This sequence belongs to the cytochrome c oxidase subunit 5A family. As to quaternary structure, component of the cytochrome c oxidase (complex IV, CIV), a multisubunit enzyme composed of 14 subunits. The complex is composed of a catalytic core of 3 subunits MT-CO1, MT-CO2 and MT-CO3, encoded in the mitochondrial DNA, and 11 supernumerary subunits COX4I1 (or COX4I2), COX5A, COX5B, COX6A1 (or COX6A2), COX6B1 (or COX6B2), COX6C, COX7A2 (or COX7A1), COX7B, COX7C, COX8A and NDUFA4, which are encoded in the nuclear genome. The complex exists as a monomer or a dimer and forms supercomplexes (SCs) in the inner mitochondrial membrane with NADH-ubiquinone oxidoreductase (complex I, CI) and ubiquinol-cytochrome c oxidoreductase (cytochrome b-c1 complex, complex III, CIII), resulting in different assemblies (supercomplex SCI(1)III(2)IV(1) and megacomplex MCI(2)III(2)IV(2)). Interacts with AFG1L. Interacts with RAB5IF. In terms of processing, in response to mitochondrial stress, the precursor protein is ubiquitinated by the SIFI complex in the cytoplasm before mitochondrial import, leading to its degradation. Within the SIFI complex, UBR4 initiates ubiquitin chain that are further elongated or branched by KCMF1.

The protein localises to the mitochondrion inner membrane. It functions in the pathway energy metabolism; oxidative phosphorylation. Functionally, component of the cytochrome c oxidase, the last enzyme in the mitochondrial electron transport chain which drives oxidative phosphorylation. The respiratory chain contains 3 multisubunit complexes succinate dehydrogenase (complex II, CII), ubiquinol-cytochrome c oxidoreductase (cytochrome b-c1 complex, complex III, CIII) and cytochrome c oxidase (complex IV, CIV), that cooperate to transfer electrons derived from NADH and succinate to molecular oxygen, creating an electrochemical gradient over the inner membrane that drives transmembrane transport and the ATP synthase. Cytochrome c oxidase is the component of the respiratory chain that catalyzes the reduction of oxygen to water. Electrons originating from reduced cytochrome c in the intermembrane space (IMS) are transferred via the dinuclear copper A center (CU(A)) of subunit 2 and heme A of subunit 1 to the active site in subunit 1, a binuclear center (BNC) formed by heme A3 and copper B (CU(B)). The BNC reduces molecular oxygen to 2 water molecules using 4 electrons from cytochrome c in the IMS and 4 protons from the mitochondrial matrix. In Homo sapiens (Human), this protein is Cytochrome c oxidase subunit 5A, mitochondrial (COX5A).